The primary structure comprises 215 residues: NAD(P)H-hydrate epimerase (215 aa).

One can recognise a YjeF N-terminal domain in the interval 10–212 (SRELDDKTIN…DIGIYRGNAF (203 aa)). 59-63 (NNGGD) contacts (6S)-NADPHX. The K(+) site is built by Asn60 and Asp122. Residues 126-132 (GSGLSRN) and Asp155 each bind (6S)-NADPHX. Ser158 is a K(+) binding site.

The protein belongs to the NnrE/AIBP family. The cofactor is K(+).

The catalysed reaction is (6R)-NADHX = (6S)-NADHX. The enzyme catalyses (6R)-NADPHX = (6S)-NADPHX. Its function is as follows. Catalyzes the epimerization of the S- and R-forms of NAD(P)HX, a damaged form of NAD(P)H that is a result of enzymatic or heat-dependent hydration. This is a prerequisite for the S-specific NAD(P)H-hydrate dehydratase to allow the repair of both epimers of NAD(P)HX. In Lentilactobacillus buchneri (strain NRRL B-30929) (Lactobacillus buchneri), this protein is NAD(P)H-hydrate epimerase.